The sequence spans 706 residues: Phosphatase and actin regulator 4 (706 aa).

An RPEL 1 repeat occupies glutamate 42–proline 67. 4 disordered regions span residues glutamate 65–alanine 123, valine 196–valine 380, valine 385–serine 404, and leucine 459–tryptophan 579. Residues aspartate 106–proline 121 are compositionally biased toward polar residues. The segment covering histidine 200–proline 211 has biased composition (basic and acidic residues). Positions aspartate 266–proline 276 are enriched in polar residues. Pro residues predominate over residues lysine 290–proline 299. Acidic residues-rich tracts occupy residues aspartate 463–leucine 476, glutamine 508–serine 523, and glutamate 531–threonine 541. Basic and acidic residues predominate over residues glycine 563–tryptophan 579. RPEL repeat units lie at residues serine 588–glutamate 613 and arginine 625–glutamate 650.

This sequence belongs to the phosphatase and actin regulator family. As to quaternary structure, binds ppp1ca and actin.

The protein localises to the cytoplasm. It is found in the cell projection. The protein resides in the lamellipodium. Its function is as follows. Regulator of protein phosphatase 1 (PP1) required for neural tube and optic fissure closure, and enteric neural crest cell (ENCCs) migration during development. Acts as an activator of PP1. During neural tube closure, localizes to the ventral neural tube and activates PP1, leading to down-regulate cell proliferation within cranial neural tissue and the neural retina. Also acts as a regulator of migration of enteric neural crest cells (ENCCs) by activating PP1, leading to repression of the integrin signaling through the rho/rock pathway. This chain is Phosphatase and actin regulator 4 (phactr4), found in Xenopus tropicalis (Western clawed frog).